The sequence spans 68 residues: Large ribosomal subunit protein bL35 (68 aa).

The segment covering 1–25 has biased composition (basic residues); sequence MGTKIKTHKGTKKRFRLSAKGKAMH. Residues 1 to 43 form a disordered region; that stretch reads MGTKIKTHKGTKKRFRLSAKGKAMHRQSGTSHLAKGLSKKRRR.

It belongs to the bacterial ribosomal protein bL35 family.

The protein is Large ribosomal subunit protein bL35 of Rhodopirellula baltica (strain DSM 10527 / NCIMB 13988 / SH1).